The sequence spans 466 residues: Cysteine--tRNA ligase (466 aa).

Residue Cys28 participates in Zn(2+) binding. Positions 30–40 match the 'HIGH' region motif; it reads PTVYNYIHIGN. Positions 208, 233, and 237 each coordinate Zn(2+). Residues 265 to 269 carry the 'KMSKS' region motif; the sequence is KMSKS. ATP is bound at residue Lys268.

It belongs to the class-I aminoacyl-tRNA synthetase family. Monomer. The cofactor is Zn(2+).

The protein localises to the cytoplasm. The enzyme catalyses tRNA(Cys) + L-cysteine + ATP = L-cysteinyl-tRNA(Cys) + AMP + diphosphate. In Staphylococcus haemolyticus (strain JCSC1435), this protein is Cysteine--tRNA ligase.